Consider the following 476-residue polypeptide: MRTTTRRLPPAPAAAAVLLAALTCLLLRPAAVAAAGGHAADRIVRLPGQPEVDFDMYSGYITVDEAAGRSLFYLLQEAPEEAQPAPLVLWLNGGPGCSSVAYGASEELGAFRVMPRGAGLVLNEYRWNKVANVLFLDSPAGVGFSYTNTSSDIYTSGDNRTAHDSYAFLAAWFERFPHYKYREFYVAGESYAGHYVPELSQLVHRSGNPVINLKGFMVGNGLIDDYHDYVGTFEFWWNHGIVSDDTYRRLKDACLHDSFIHPSPACDAATDVATAEQGNIDMYSLYTPVCNISSSSSSSSLSRRRTRGRYPWLTGSYDPCTERYSTAYYNRRDVQTALHANVTGAMNYTWTNCSDTINTHWHDAPRSMLPIYRELIAAGLRIWVFSGDTDAVVPLTATRYSIGALGLATTTSWYPWYDDLQEVGGWSQVYKGLTLVSVRGAGHEVPLHRPRQALILFQQFLQGKPMPGRTTNVTVA.

The signal sequence occupies residues 1–34 (MRTTTRRLPPAPAAAAVLLAALTCLLLRPAAVAA). Cystine bridges form between cysteine 97–cysteine 353, cysteine 254–cysteine 266, and cysteine 290–cysteine 320. Asparagine 148 and asparagine 159 each carry an N-linked (GlcNAc...) asparagine glycan. The active site involves serine 190. Asparagine 291 carries an N-linked (GlcNAc...) asparagine glycan. A propeptide spans 295–313 (SSSSSSLSRRRTRGRYPWL) (linker peptide). Threonine 314 bears the Blocked amino end (Thr) mark. N-linked (GlcNAc...) asparagine glycosylation is found at asparagine 341 and asparagine 347. Residue asparagine 352 is glycosylated (N-linked (GlcNAc...) asparagine; partial). A glycan (O-linked (GalNAc...) threonine; in variant 351-AT-352) is linked at asparagine 352. Active-site residues include aspartate 390 and histidine 443. Residue asparagine 472 is glycosylated (N-linked (GlcNAc...) asparagine).

The protein belongs to the peptidase S10 family. In terms of assembly, carboxypeptidase II is a dimer, where each monomer is composed of two chains linked by a disulfide bond.

The protein resides in the secreted. It carries out the reaction Preferential release of a C-terminal arginine or lysine residue.. In terms of biological role, may be involved in the degradation of small peptides (2-5 residues) or in the degradation of storage proteins in the embryo. The polypeptide is Serine carboxypeptidase 2 (CBP2) (Hordeum vulgare (Barley)).